The sequence spans 163 residues: Transcriptional repressor NrdR (163 aa).

Residues 3–34 fold into a zinc finger; that stretch reads CPFCRHPDSRVVDSRVSDDGSSIRRRRQCPQC. Residues 46-136 form the ATP-cone domain; sequence LTVIKRSGIG…VYQAFESLDD (91 aa).

This sequence belongs to the NrdR family. Zn(2+) is required as a cofactor.

Functionally, negatively regulates transcription of bacterial ribonucleotide reductase nrd genes and operons by binding to NrdR-boxes. The sequence is that of Transcriptional repressor NrdR from Renibacterium salmoninarum (strain ATCC 33209 / DSM 20767 / JCM 11484 / NBRC 15589 / NCIMB 2235).